We begin with the raw amino-acid sequence, 386 residues long: Ovalbumin (386 aa).

Residue Gly-2 is modified to N-acetylglycine. At Ser-69 the chain carries Phosphoserine. A disulfide bond links Cys-74 and Cys-121. Residue Asn-293 is glycosylated (N-linked (GlcNAc...) asparagine). Phosphoserine is present on Ser-345.

This sequence belongs to the serpin family. Ov-serpin subfamily. The N-terminus is blocked.

The protein resides in the secreted. In terms of biological role, storage protein of egg white. Lacks protease inhibitory activity. This Dromaius novaehollandiae (Emu) protein is Ovalbumin (SERPINB14).